We begin with the raw amino-acid sequence, 374 residues long: Probable dual-specificity RNA methyltransferase RlmN 3 (374 aa).

E96 functions as the Proton acceptor in the catalytic mechanism. One can recognise a Radical SAM core domain in the interval 110–350; the sequence is DHSRKTICIS…VTLRREKGHD (241 aa). A disulfide bond links C117 and C355. [4Fe-4S] cluster contacts are provided by C124, C128, and C131. S-adenosyl-L-methionine is bound by residues 181-182, S213, 236-238, and N312; these read GE and SLH. Residue C355 is the S-methylcysteine intermediate of the active site.

The protein belongs to the radical SAM superfamily. RlmN family. Requires [4Fe-4S] cluster as cofactor.

The protein localises to the cytoplasm. It catalyses the reaction adenosine(2503) in 23S rRNA + 2 reduced [2Fe-2S]-[ferredoxin] + 2 S-adenosyl-L-methionine = 2-methyladenosine(2503) in 23S rRNA + 5'-deoxyadenosine + L-methionine + 2 oxidized [2Fe-2S]-[ferredoxin] + S-adenosyl-L-homocysteine. The enzyme catalyses adenosine(37) in tRNA + 2 reduced [2Fe-2S]-[ferredoxin] + 2 S-adenosyl-L-methionine = 2-methyladenosine(37) in tRNA + 5'-deoxyadenosine + L-methionine + 2 oxidized [2Fe-2S]-[ferredoxin] + S-adenosyl-L-homocysteine. Specifically methylates position 2 of adenine 2503 in 23S rRNA and position 2 of adenine 37 in tRNAs. This chain is Probable dual-specificity RNA methyltransferase RlmN 3, found in Opitutus terrae (strain DSM 11246 / JCM 15787 / PB90-1).